Here is a 172-residue protein sequence, read N- to C-terminus: Austinoid biosynthesis clusters protein J (172 aa).

It belongs to the trt14 isomerase family. As to quaternary structure, homodimer.

It functions in the pathway secondary metabolite biosynthesis; terpenoid biosynthesis. Its function is as follows. Part of the gene cluster B that mediates the biosynthesis of the fungal meroterpenoid acetoxydehydroaustin. The first step of the pathway is the synthesis of 3,5-dimethylorsellinic acid by the polyketide synthase ausA. 3,5-dimethylorsellinic acid is then prenylated by the polyprenyl transferase ausN. Further epoxidation by the FAD-dependent monooxygenase ausM and cyclization by the probable terpene cyclase ausL lead to the formation of protoaustinoid A. Protoaustinoid A is then oxidized to spiro-lactone preaustinoid A3 by the combined action of the FAD-binding monooxygenases ausB and ausC, and the dioxygenase ausE. Acid-catalyzed keto-rearrangement and ring contraction of the tetraketide portion of preaustinoid A3 by ausJ lead to the formation of preaustinoid A4. The aldo-keto reductase ausK, with the help of ausH, is involved in the next step by transforming preaustinoid A4 into isoaustinone which is in turn hydroxylated by the P450 monooxygenase ausI to form austinolide. The cytochrome P450 monooxygenase ausG then modifies austinolide to austinol. Austinol is further acetylated to austin by the O-acetyltransferase ausP, which spontaneously changes to dehydroaustin. The cytochrome P450 monooxygenase then converts dehydroaustin is into 7-dehydrodehydroaustin. The hydroxylation catalyzed by ausR permits the second O-acetyltransferase ausQ to add an additional acetyl group to the molecule, leading to the formation of acetoxydehydroaustin. Due to genetic rearrangements of the clusters and the subsequent loss of some enzymes, the end product of the Penicillium brasilianum austinoid biosynthesis clusters is acetoxydehydroaustin. This Penicillium brasilianum protein is Austinoid biosynthesis clusters protein J.